Consider the following 183-residue polypeptide: Ribosome rescue factor SmrB (183 aa).

A Smr domain is found at 98–173 (LDLHGLTQLQ…GDAALLVLIE (76 aa)).

Belongs to the SmrB family. As to quaternary structure, associates with collided ribosomes, but not with correctly translating polysomes.

Functionally, acts as a ribosome collision sensor. Detects stalled/collided disomes (pairs of ribosomes where the leading ribosome is stalled and a second ribosome has collided with it) and endonucleolytically cleaves mRNA at the 5' boundary of the stalled ribosome. Stalled/collided disomes form a new interface (primarily via the 30S subunits) that binds SmrB. Cleaved mRNA becomes available for tmRNA ligation, leading to ribosomal subunit dissociation and rescue of stalled ribosomes. This chain is Ribosome rescue factor SmrB, found in Escherichia coli O7:K1 (strain IAI39 / ExPEC).